A 353-amino-acid polypeptide reads, in one-letter code: Photosystem II protein D1 (353 aa).

Threonine 2 is subject to N-acetylthreonine. Threonine 2 carries the post-translational modification Phosphothreonine. The next 3 helical transmembrane spans lie at 29–46 (YIGWFGVVMIPTLLTATS), 118–133 (HFFLGICCYMGREWEL), and 142–156 (WIAVAYSAPVAAATA). A chlorophyll a-binding site is contributed by histidine 118. Tyrosine 126 contributes to the pheophytin a binding site. Positions 170 and 189 each coordinate [CaMn4O5] cluster. A helical membrane pass occupies residues 197–218 (FHMLGVAGVFGGSLFSAMHGSL). Histidine 198 lines the chlorophyll a pocket. Residues histidine 215 and 264–265 (SF) each bind a quinone. Residue histidine 215 coordinates Fe cation. Histidine 272 contributes to the Fe cation binding site. Residues 274–288 (FLAAWPVVGIWFTAL) traverse the membrane as a helical segment. [CaMn4O5] cluster contacts are provided by histidine 332, glutamate 333, aspartate 342, and alanine 344. Positions 345–353 (SVEAPSVNG) are excised as a propeptide.

This sequence belongs to the reaction center PufL/M/PsbA/D family. As to quaternary structure, PSII is composed of 1 copy each of membrane proteins PsbA, PsbB, PsbC, PsbD, PsbE, PsbF, PsbH, PsbI, PsbJ, PsbK, PsbL, PsbM, PsbT, PsbX, PsbY, PsbZ, Psb30/Ycf12, at least 3 peripheral proteins of the oxygen-evolving complex and a large number of cofactors. It forms dimeric complexes. The D1/D2 heterodimer binds P680, chlorophylls that are the primary electron donor of PSII, and subsequent electron acceptors. It shares a non-heme iron and each subunit binds pheophytin, quinone, additional chlorophylls, carotenoids and lipids. D1 provides most of the ligands for the Mn4-Ca-O5 cluster of the oxygen-evolving complex (OEC). There is also a Cl(-1) ion associated with D1 and D2, which is required for oxygen evolution. The PSII complex binds additional chlorophylls, carotenoids and specific lipids. is required as a cofactor. Post-translationally, tyr-161 forms a radical intermediate that is referred to as redox-active TyrZ, YZ or Y-Z. In terms of processing, C-terminally processed by CTPA; processing is essential to allow assembly of the oxygen-evolving complex and thus photosynthetic growth.

The protein localises to the plastid. The protein resides in the chloroplast thylakoid membrane. The enzyme catalyses 2 a plastoquinone + 4 hnu + 2 H2O = 2 a plastoquinol + O2. Photosystem II (PSII) is a light-driven water:plastoquinone oxidoreductase that uses light energy to abstract electrons from H(2)O, generating O(2) and a proton gradient subsequently used for ATP formation. It consists of a core antenna complex that captures photons, and an electron transfer chain that converts photonic excitation into a charge separation. The D1/D2 (PsbA/PsbD) reaction center heterodimer binds P680, the primary electron donor of PSII as well as several subsequent electron acceptors. The polypeptide is Photosystem II protein D1 (Chaetosphaeridium globosum (Charophycean green alga)).